A 483-amino-acid polypeptide reads, in one-letter code: Glutamate--tRNA ligase (483 aa).

The 'HIGH' region signature appears at 9-19; that stretch reads PSPTGFLHIGN. The 'KMSKS' region motif lies at 253–257; the sequence is KLSKR. Lys-256 lines the ATP pocket.

Belongs to the class-I aminoacyl-tRNA synthetase family. Glutamate--tRNA ligase type 1 subfamily. Monomer.

The protein localises to the cytoplasm. The enzyme catalyses tRNA(Glu) + L-glutamate + ATP = L-glutamyl-tRNA(Glu) + AMP + diphosphate. Its function is as follows. Catalyzes the attachment of glutamate to tRNA(Glu) in a two-step reaction: glutamate is first activated by ATP to form Glu-AMP and then transferred to the acceptor end of tRNA(Glu). This chain is Glutamate--tRNA ligase, found in Mycoplasma capricolum subsp. capricolum (strain California kid / ATCC 27343 / NCTC 10154).